The sequence spans 456 residues: DnaJ homolog dnj-10 (456 aa).

The region spanning 44-108 is the J domain; the sequence is DYYKTLGVDK…TKRQEYDAYG (65 aa). Residues 178-257 form a CR-type zinc finger; that stretch reads GATKNVSVNV…CEGEGQTVQR (80 aa). CXXCXGXG motif repeat units lie at residues 208-215, 231-238, and 245-252; these read CPYCNGTG, CNRCRGSG, and CQECEGEG. Positions 395-429 are enriched in basic and acidic residues; it reads KGLEKNQKTEEKETKKNEEKKSEGASESQKRRSEP. Residues 395–443 are disordered; that stretch reads KGLEKNQKTEEKETKKNEEKKSEGASESQKRRSEPVAENAETIDENQEN.

This chain is DnaJ homolog dnj-10 (dnj-10), found in Caenorhabditis elegans.